Here is a 466-residue protein sequence, read N- to C-terminus: Hepatocyte nuclear factor 3-alpha (466 aa).

The fork-head DNA-binding region spans alanine 169–leucine 260. An essential for DNA binding region spans residues glycine 251 to glutamate 288. The tract at residues glutamate 269 to serine 358 is disordered. The span at glycine 273–lysine 284 shows a compositional bias: gly residues. Residues serine 303 and serine 327 each carry the phosphoserine modification. Composition is skewed to low complexity over residues glycine 318–proline 328 and glutamate 344–serine 358.

In terms of assembly, binds DNA as a monomer. Interacts with FOXA2. Interacts with NKX2-1. Interacts with HDAC7. Interacts with the histone H3-H4 heterodimer. Associates with nucleosomes containing histone H2A. Interacts with AR. Interacts with NR0B2. In terms of tissue distribution, liver.

It localises to the nucleus. In terms of biological role, transcription factor that is involved in embryonic development, establishment of tissue-specific gene expression and regulation of gene expression in differentiated tissues. Is thought to act as a 'pioneer' factor opening the compacted chromatin for other proteins through interactions with nucleosomal core histones and thereby replacing linker histones at target enhancer and/or promoter sites. Binds DNA with the consensus sequence 5'-[AC]A[AT]T[AG]TT[GT][AG][CT]T[CT]-3'. Proposed to play a role in translating the epigenetic signatures into cell type-specific enhancer-driven transcriptional programs. Involved in glucose homeostasis; activates the GCG promoter. Involved in the development of multiple endoderm-derived organ systems such as the liver, pancreas, lungs and prostate; FOXA1 and FOXA2 seem to have at least in part redundant roles. Modulates the transcriptional activity of nuclear hormone receptors. Is required for maximal gene activation mediated by AR in the prostate. Negatively regulates AR transactivation via competition with coactivators such as NCOA2. Is involved in ESR1-mediated transcription. Involved in regulation of apoptosis. Involved in cell cycle regulation. Originally described as a transcription activator for a number of liver genes such as AFP, albumin, tyrosine aminotransferase, PEPCK, etc. Interacts with the cis-acting regulatory regions of these genes. This is Hepatocyte nuclear factor 3-alpha (Foxa1) from Rattus norvegicus (Rat).